Here is a 299-residue protein sequence, read N- to C-terminus: ATP phosphoribosyltransferase (299 aa).

Belongs to the ATP phosphoribosyltransferase family. Long subfamily. Equilibrium between an active dimeric form, an inactive hexameric form and higher aggregates. Interconversion between the various forms is largely reversible and is influenced by the natural substrates and inhibitors of the enzyme. Requires Mg(2+) as cofactor.

It is found in the cytoplasm. The enzyme catalyses 1-(5-phospho-beta-D-ribosyl)-ATP + diphosphate = 5-phospho-alpha-D-ribose 1-diphosphate + ATP. The protein operates within amino-acid biosynthesis; L-histidine biosynthesis; L-histidine from 5-phospho-alpha-D-ribose 1-diphosphate: step 1/9. Feedback inhibited by histidine. In terms of biological role, catalyzes the condensation of ATP and 5-phosphoribose 1-diphosphate to form N'-(5'-phosphoribosyl)-ATP (PR-ATP). Has a crucial role in the pathway because the rate of histidine biosynthesis seems to be controlled primarily by regulation of HisG enzymatic activity. The polypeptide is ATP phosphoribosyltransferase (Blochmanniella floridana).